The following is a 180-amino-acid chain: NAD(P)H-quinone oxidoreductase subunit I, chloroplastic (180 aa).

4Fe-4S ferredoxin-type domains are found at residues 55 to 84 (GRIH…VDWR) and 95 to 124 (LNYS…MTEE). Positions 64, 67, 70, 74, 104, 107, 110, and 114 each coordinate [4Fe-4S] cluster.

It belongs to the complex I 23 kDa subunit family. In terms of assembly, NDH is composed of at least 16 different subunits, 5 of which are encoded in the nucleus. [4Fe-4S] cluster is required as a cofactor.

It is found in the plastid. Its subcellular location is the chloroplast thylakoid membrane. The catalysed reaction is a plastoquinone + NADH + (n+1) H(+)(in) = a plastoquinol + NAD(+) + n H(+)(out). It carries out the reaction a plastoquinone + NADPH + (n+1) H(+)(in) = a plastoquinol + NADP(+) + n H(+)(out). In terms of biological role, NDH shuttles electrons from NAD(P)H:plastoquinone, via FMN and iron-sulfur (Fe-S) centers, to quinones in the photosynthetic chain and possibly in a chloroplast respiratory chain. The immediate electron acceptor for the enzyme in this species is believed to be plastoquinone. Couples the redox reaction to proton translocation, and thus conserves the redox energy in a proton gradient. This chain is NAD(P)H-quinone oxidoreductase subunit I, chloroplastic, found in Oryza nivara (Indian wild rice).